Here is an 87-residue protein sequence, read N- to C-terminus: Small ribosomal subunit protein uS17 (87 aa).

It belongs to the universal ribosomal protein uS17 family. Part of the 30S ribosomal subunit.

Functionally, one of the primary rRNA binding proteins, it binds specifically to the 5'-end of 16S ribosomal RNA. The protein is Small ribosomal subunit protein uS17 of Listeria innocua serovar 6a (strain ATCC BAA-680 / CLIP 11262).